We begin with the raw amino-acid sequence, 61 residues long: Large ribosomal subunit protein uL30 (61 aa).

This sequence belongs to the universal ribosomal protein uL30 family. In terms of assembly, part of the 50S ribosomal subunit.

The chain is Large ribosomal subunit protein uL30 from Thermosipho africanus (strain TCF52B).